A 719-amino-acid polypeptide reads, in one-letter code: Putative alpha-1,3-mannosyltransferase MNT4 (719 aa).

Residues 1–4 (MKFH) lie on the Cytoplasmic side of the membrane. A helical membrane pass occupies residues 5–22 (LKRYVIVTSILLSFFLLF). The Lumenal portion of the chain corresponds to 23-719 (RRQFLPLTQR…KKLIEIWLQD (697 aa)). Asn148, Asn273, and Asn449 each carry an N-linked (GlcNAc...) asparagine glycan.

It belongs to the MNN1/MNT family.

It localises to the golgi apparatus membrane. It functions in the pathway protein modification; protein glycosylation. In terms of biological role, responsible for addition of the terminal mannose residues to the outer chain of core N-linked polysaccharides and to O-linked mannotriose. Implicated in late Golgi modifications. This Candida albicans (strain SC5314 / ATCC MYA-2876) (Yeast) protein is Putative alpha-1,3-mannosyltransferase MNT4 (MNT4).